The sequence spans 800 residues: Aldehyde dehydrogenase family 16 member A1 (800 aa).

This sequence belongs to the aldehyde dehydrogenase family. As to quaternary structure, interacts with SPG21.

In Bos taurus (Bovine), this protein is Aldehyde dehydrogenase family 16 member A1 (ALDH16A1).